We begin with the raw amino-acid sequence, 678 residues long: ERAD-associated E3 ubiquitin-protein ligase component HRD3A (678 aa).

A signal peptide spans Met-1 to Ala-25. A disordered region spans residues Gly-40 to Trp-71. Sel1-like repeat units lie at residues Pro-124–Asn-159, Ala-242–Gly-277, Pro-279–Gly-313, Ala-317–Asn-349, Ser-353–Gly-386, Pro-388–Gly-422, Ala-506–Gln-537, and Ala-540–Asp-568. N-linked (GlcNAc...) asparagine glycosylation is found at Asn-298 and Asn-335. A helical transmembrane segment spans residues Val-620–Leu-640.

This sequence belongs to the sel-1 family. As to quaternary structure, interacts with OS9.

The protein localises to the endoplasmic reticulum membrane. In terms of biological role, component of the endoplasmic reticulum (ER) quality control system called ER-associated degradation (ERAD) and involved in ubiquitin-dependent degradation of misfolded endoplasmic reticulum proteins. Functions as an ERAD substrate-recruiting factor that recognizes misfolded proteins for the HRD1 E3 ubiquitin ligase complex. Targets the misfolded LRR receptor kinase BRI1. The sequence is that of ERAD-associated E3 ubiquitin-protein ligase component HRD3A from Arabidopsis thaliana (Mouse-ear cress).